Reading from the N-terminus, the 343-residue chain is SET and MYND domain-containing protein DDB_G0292454 (343 aa).

The region spanning 77–307 is the SET domain; it reads EPFISYPSII…PGDEITISYT (231 aa). C93, C96, C111, C114, C120, C124, H133, and C137 together coordinate Zn(2+). An MYND-type zinc finger spans residues 93-137; that stretch reads CNHCLKEIKKEEEEIKQECEECKVYKYCSIECKEKSSIEYHSVLC.

It belongs to the class V-like SAM-binding methyltransferase superfamily.

In terms of biological role, probable methyltransferase. The chain is SET and MYND domain-containing protein DDB_G0292454 from Dictyostelium discoideum (Social amoeba).